Consider the following 512-residue polypeptide: Alpha-1B-glycoprotein (512 aa).

Positions 1-18 (MSLLATVLLLWGFTLGPG) are cleaved as a signal peptide. 5 Ig-like V-type domains span residues 22–126 (MLDS…VTGK), 127–219 (EPLP…MYAS), 220–312 (QAPP…PVEL), 313–415 (MWSD…LRVN), and 416–512 (GPPP…IVEG). Residues Asn44, Asn89, and Asn192 are each glycosylated (N-linked (GlcNAc...) asparagine). 5 cysteine pairs are disulfide-bonded: Cys49–Cys96, Cys153–Cys195, Cys245–Cys292, Cys343–Cys392, and Cys441–Cys488. Asn369, Asn381, Asn389, and Asn485 each carry an N-linked (GlcNAc...) asparagine glycan.

As to quaternary structure, interacts with CRISP3. Expressed in the liver hepatocytes of male and female GH transgenic mice and in the liver of female, but not of male, non-transgenic mice.

The protein resides in the secreted. This Mus musculus (Mouse) protein is Alpha-1B-glycoprotein (A1bg).